Reading from the N-terminus, the 530-residue chain is Autoinducer-2 kinase (530 aa).

Belongs to the FGGY kinase family.

It is found in the cytoplasm. The enzyme catalyses (S)-4,5-dihydroxypentane-2,3-dione + ATP = (2S)-2-hydroxy-3,4-dioxopentyl phosphate + ADP + H(+). In terms of biological role, catalyzes the phosphorylation of autoinducer-2 (AI-2) to phospho-AI-2, which subsequently inactivates the transcriptional regulator LsrR and leads to the transcription of the lsr operon. Phosphorylates the ring-open form of (S)-4,5-dihydroxypentane-2,3-dione (DPD), which is the precursor to all AI-2 signaling molecules, at the C5 position. The protein is Autoinducer-2 kinase of Salmonella typhimurium (strain LT2 / SGSC1412 / ATCC 700720).